A 580-amino-acid polypeptide reads, in one-letter code: Probable alpha-1,3-mannosyltransferase MNT4 (580 aa).

At 1-10 the chain is on the cytoplasmic side; the sequence is MVLRIRRIKK. Residues 11 to 29 form a helical; Signal-anchor for type II membrane protein membrane-spanning segment; the sequence is LAPLIFTSLLSLIVLFRVY. Topologically, residues 30-580 are lumenal; it reads RQYPFSDHFE…KVVELWNKVV (551 aa). N-linked (GlcNAc...) asparagine glycans are attached at residues Asn-132, Asn-167, Asn-223, and Asn-349.

The protein belongs to the MNN1/MNT family.

It localises to the membrane. This chain is Probable alpha-1,3-mannosyltransferase MNT4 (MNT4), found in Saccharomyces cerevisiae (strain ATCC 204508 / S288c) (Baker's yeast).